Here is a 696-residue protein sequence, read N- to C-terminus: uncharacterized protein (696 aa).

Transmembrane regions (helical) follow at residues I38–A58, L107–V127, A215–L235, S245–L265, T292–L312, V329–E349, F380–A400, F402–G422, F433–S453, and L457–P477. CBS domains lie at R527–S587 and I617–G674.

The protein belongs to the chloride channel (TC 2.A.49) family.

It is found in the membrane. In terms of biological role, voltage-gated chloride channel. This is an uncharacterized protein from Schizosaccharomyces pombe (strain 972 / ATCC 24843) (Fission yeast).